Here is a 27-residue protein sequence, read N- to C-terminus: Conotoxin flf14b (27 aa).

Cystine bridges form between C6–C26 and C10–C22.

As to expression, expressed by the venom duct.

Its subcellular location is the secreted. The polypeptide is Conotoxin flf14b (Conus anabathrum floridanus (Florida cone)).